The primary structure comprises 301 residues: Lysozyme-like protein 3 (301 aa).

The signal sequence occupies residues 1–15; sequence MKLFALLVSITLCYS. The region spanning 64-282 is the Ch-type lysozyme domain; sequence HAYSVDISFH…HLSQIVHFST (219 aa).

The protein belongs to the glycosyl hydrolase 25 family.

Its function is as follows. Plays a role in the stress response to heavy metals such as copper, probably in a kgb-1-dependent manner. The polypeptide is Lysozyme-like protein 3 (Caenorhabditis elegans).